Here is a 178-residue protein sequence, read N- to C-terminus: Large ribosomal subunit protein uL6 (178 aa).

This sequence belongs to the universal ribosomal protein uL6 family. In terms of assembly, part of the 50S ribosomal subunit.

Its function is as follows. This protein binds to the 23S rRNA, and is important in its secondary structure. It is located near the subunit interface in the base of the L7/L12 stalk, and near the tRNA binding site of the peptidyltransferase center. The protein is Large ribosomal subunit protein uL6 of Streptococcus gordonii (strain Challis / ATCC 35105 / BCRC 15272 / CH1 / DL1 / V288).